The primary structure comprises 458 residues: UDP-N-acetylmuramate--L-alanine ligase (458 aa).

118–124 (GTHGKTT) provides a ligand contact to ATP.

This sequence belongs to the MurCDEF family.

The protein resides in the cytoplasm. It carries out the reaction UDP-N-acetyl-alpha-D-muramate + L-alanine + ATP = UDP-N-acetyl-alpha-D-muramoyl-L-alanine + ADP + phosphate + H(+). It participates in cell wall biogenesis; peptidoglycan biosynthesis. Cell wall formation. The polypeptide is UDP-N-acetylmuramate--L-alanine ligase (Clostridium botulinum (strain ATCC 19397 / Type A)).